A 393-amino-acid polypeptide reads, in one-letter code: Protein TsgA (393 aa).

12 helical membrane-spanning segments follow: residues 11 to 31 (WISF…GMVM), 51 to 71 (FLNA…EIVP), 78 to 98 (FGFI…SLAL), 101 to 121 (AAMF…TFLI), 134 to 154 (LLFT…VAAF), 162 to 182 (WYWV…LTFG), 206 to 226 (IGVL…LGFI), 245 to 265 (ALVS…SFIL), 273 to 293 (ILTV…TGTQ), 298 to 318 (WFIL…ITLG), 332 to 352 (FILT…GPIV), and 361 to 381 (LLTA…LGFV).

This sequence belongs to the major facilitator superfamily. TsgA family.

Its subcellular location is the cell inner membrane. This is Protein TsgA from Salmonella heidelberg (strain SL476).